A 460-amino-acid chain; its full sequence is MGKEEKTHINLVVIGHVDSGKSTTTGHLIYKCGGIDNRTIEKFEKEAEELGKKSFKYAWVLDKLKAERERGITIDIALWKFETPKYHVTVIDAPGHRDFIKNMITGTSQADCAILIIAAGTGEFEAGISKDGQTREHALLAFTLGVKQLIVAINKMDSTNWSEPRFNEIVKEVSNFIKKVGYNPKAVPFVPISGFEGDNMIQPSTNAPWYKGWNKETASGKHSGKTLLDAIDAIDPPTRPTEKPLRLPLQDVYKISGIGTVPVGRVETGVIKPGMVVTFAPSNVTTEVKSVEMHHQQLTQGNPGDNVGFNVKNVSVKEVRRGNVAGDSKNDPPKGCDSFNAQVIVLNHPGQVGAGYAPVLDCHTAHIACKFSELLEKIDRRTGKSVENNPKFIKSGDAAIVKMVPSKPMCVEAFTDYPPLGRFAVRDMRQTVAVGVIKSVEKSEKTGGKVTKAAQKAAKK.

N,N,N-trimethylglycine is present on glycine 2. The residue at position 3 (lysine 3) is an N6,N6-dimethyllysine; alternate. Lysine 3 is modified (N6-methyllysine; alternate). The tr-type G domain maps to 6 to 241 (KTHINLVVIG…DAIDPPTRPT (236 aa)). The tract at residues 15 to 22 (GHVDSGKS) is G1. GTP is bound at residue 15 to 22 (GHVDSGKS). N6-methyllysine is present on lysine 31. Residues 71–75 (GITID) are G2. Residue lysine 80 is modified to N6,N6,N6-trimethyllysine. The segment at 92–95 (DAPG) is G3. GTP contacts are provided by residues 92–96 (DAPGH) and 154–157 (NKMD). The interval 154-157 (NKMD) is G4. Residues 193–195 (SGF) form a G5 region. At lysine 317 the chain carries N6,N6-dimethyllysine; alternate. At lysine 317 the chain carries N6-methyllysine; alternate. Position 391 is an N6-methyllysine (lysine 391).

Belongs to the TRAFAC class translation factor GTPase superfamily. Classic translation factor GTPase family. EF-Tu/EF-1A subfamily.

The protein localises to the cytoplasm. In terms of biological role, this protein promotes the GTP-dependent binding of aminoacyl-tRNA to the A-site of ribosomes during protein biosynthesis. This Coccidioides immitis (strain RS) (Valley fever fungus) protein is Elongation factor 1-alpha (TEF).